The chain runs to 387 residues: MLADLSEALRERQQEGLYRSRPVLEGPQSPHVTIDGRDFLAFCSNDYLGLANHPALIEAAAEGARCYGVGSGASHLISGHFRAHHELEEALAAFVGLPRTLLFSTGYMANMAVVTALAGRGDAIFADRLNHASLNDAALLSRARFIRYPHLDLDTLARQLETTKARRRLVVTDAVFSMDGDMAPVAELLTLCQRFDAWLLLDDAHGFGVLGERGKGSLYHSQRIERDTPYLIYMATLGKAAGVSGAFVAAQAPVVETLIQHGRTYGYTTAAPPLLAHTLLTSLQLISQESWRRERLALLIERLRQRLHSLPWPLLLSETPIQPLLVGESQEAVRLDLALRERGIWVPAIRPPTVPQGMARLRISLSAVHTEADVDRLGAALRDLAQC.

Substrate is bound at residue Arg19. 106-107 (GY) contacts pyridoxal 5'-phosphate. His131 lines the substrate pocket. 3 residues coordinate pyridoxal 5'-phosphate: Ser177, His205, and Thr236. Lys239 is subject to N6-(pyridoxal phosphate)lysine. Thr353 serves as a coordination point for substrate.

This sequence belongs to the class-II pyridoxal-phosphate-dependent aminotransferase family. BioF subfamily. In terms of assembly, homodimer. The cofactor is pyridoxal 5'-phosphate.

The catalysed reaction is 6-carboxyhexanoyl-[ACP] + L-alanine + H(+) = (8S)-8-amino-7-oxononanoate + holo-[ACP] + CO2. It participates in cofactor biosynthesis; biotin biosynthesis. Its function is as follows. Catalyzes the decarboxylative condensation of pimeloyl-[acyl-carrier protein] and L-alanine to produce 8-amino-7-oxononanoate (AON), [acyl-carrier protein], and carbon dioxide. This is 8-amino-7-oxononanoate synthase from Nitrosomonas europaea (strain ATCC 19718 / CIP 103999 / KCTC 2705 / NBRC 14298).